Reading from the N-terminus, the 210-residue chain is Na(+)-translocating NADH-quinone reductase subunit D (210 aa).

Transmembrane regions (helical) follow at residues 14 to 34 (PIVNNNPIALQVLGVCSALAV), 42 to 62 (LVMALALTAVTAFSNLFISMI), 72 to 92 (IIVQMTIIASLVIVVDQLLQA), 103 to 123 (VFVGLIITNCIVMGRAEAYAM), 131 to 151 (FMDGIGNGLGYGAILLAVGFV), and 178 to 198 (NGLLLLPPSAFFLIGMLIWII).

Belongs to the NqrDE/RnfAE family. As to quaternary structure, composed of six subunits; NqrA, NqrB, NqrC, NqrD, NqrE and NqrF.

It is found in the cell inner membrane. The enzyme catalyses a ubiquinone + n Na(+)(in) + NADH + H(+) = a ubiquinol + n Na(+)(out) + NAD(+). Functionally, NQR complex catalyzes the reduction of ubiquinone-1 to ubiquinol by two successive reactions, coupled with the transport of Na(+) ions from the cytoplasm to the periplasm. NqrA to NqrE are probably involved in the second step, the conversion of ubisemiquinone to ubiquinol. This Shewanella oneidensis (strain ATCC 700550 / JCM 31522 / CIP 106686 / LMG 19005 / NCIMB 14063 / MR-1) protein is Na(+)-translocating NADH-quinone reductase subunit D.